A 457-amino-acid chain; its full sequence is Bifunctional protein GlmU (457 aa).

The interval methionine 1–arginine 228 is pyrophosphorylase. UDP-N-acetyl-alpha-D-glucosamine is bound by residues leucine 9–glycine 12, lysine 23, glutamine 73, and glycine 78–threonine 79. Aspartate 102 contacts Mg(2+). 4 residues coordinate UDP-N-acetyl-alpha-D-glucosamine: glycine 139, glutamate 154, asparagine 169, and asparagine 226. Position 226 (asparagine 226) interacts with Mg(2+). The segment at valine 229–asparagine 249 is linker. An N-acetyltransferase region spans residues glycine 250–leucine 457. UDP-N-acetyl-alpha-D-glucosamine is bound by residues arginine 331 and lysine 349. Histidine 361 serves as the catalytic Proton acceptor. Residues tyrosine 364 and asparagine 375 each contribute to the UDP-N-acetyl-alpha-D-glucosamine site. Acetyl-CoA contacts are provided by residues asparagine 384 to tyrosine 385, alanine 421, and arginine 438.

It in the N-terminal section; belongs to the N-acetylglucosamine-1-phosphate uridyltransferase family. In the C-terminal section; belongs to the transferase hexapeptide repeat family. In terms of assembly, homotrimer. The cofactor is Mg(2+).

It localises to the cytoplasm. It catalyses the reaction alpha-D-glucosamine 1-phosphate + acetyl-CoA = N-acetyl-alpha-D-glucosamine 1-phosphate + CoA + H(+). The enzyme catalyses N-acetyl-alpha-D-glucosamine 1-phosphate + UTP + H(+) = UDP-N-acetyl-alpha-D-glucosamine + diphosphate. Its pathway is nucleotide-sugar biosynthesis; UDP-N-acetyl-alpha-D-glucosamine biosynthesis; N-acetyl-alpha-D-glucosamine 1-phosphate from alpha-D-glucosamine 6-phosphate (route II): step 2/2. The protein operates within nucleotide-sugar biosynthesis; UDP-N-acetyl-alpha-D-glucosamine biosynthesis; UDP-N-acetyl-alpha-D-glucosamine from N-acetyl-alpha-D-glucosamine 1-phosphate: step 1/1. It functions in the pathway bacterial outer membrane biogenesis; LPS lipid A biosynthesis. Its function is as follows. Catalyzes the last two sequential reactions in the de novo biosynthetic pathway for UDP-N-acetylglucosamine (UDP-GlcNAc). The C-terminal domain catalyzes the transfer of acetyl group from acetyl coenzyme A to glucosamine-1-phosphate (GlcN-1-P) to produce N-acetylglucosamine-1-phosphate (GlcNAc-1-P), which is converted into UDP-GlcNAc by the transfer of uridine 5-monophosphate (from uridine 5-triphosphate), a reaction catalyzed by the N-terminal domain. This Caldanaerobacter subterraneus subsp. tengcongensis (strain DSM 15242 / JCM 11007 / NBRC 100824 / MB4) (Thermoanaerobacter tengcongensis) protein is Bifunctional protein GlmU.